The sequence spans 228 residues: Rab-like protein 2A (228 aa).

GTP-binding positions include 28-35 (GDSAVGKS), 76-80 (DTAGQ), and 133-136 (NKID). The tract at residues 200–228 (LEQEEEDVPDQEQSSSIETPSEEVASPHS) is disordered.

Belongs to the small GTPase superfamily. Rab family. In terms of assembly, interacts with IFT27, IFT81, IFT172, ATP6V1E1, HK1, LDHC, MAPRE1 and HSPA2. As to expression, expressed in the testis.

Functionally, plays an essential role in male fertility, sperm intra-flagellar transport, and tail assembly. Binds, in a GTP-regulated manner, to a specific set of effector proteins including key proteins involved in cilia development and function and delivers them into the growing sperm tail. The polypeptide is Rab-like protein 2A (RABL2A) (Homo sapiens (Human)).